Reading from the N-terminus, the 303-residue chain is Coenzyme PQQ synthesis protein B (303 aa).

This sequence belongs to the PqqB family.

It participates in cofactor biosynthesis; pyrroloquinoline quinone biosynthesis. Functionally, may be involved in the transport of PQQ or its precursor to the periplasm. This is Coenzyme PQQ synthesis protein B from Acinetobacter baumannii (strain AB0057).